The following is a 362-amino-acid chain: MELENQLSKLHELKNNLKEMGASLCLASLEKKSAELELKMQEAGFWDDVQKAQEVTQEAKRVKDKIDKFKNLNERIDDVEVLKELMEENDEETAKEIISEVKALSKEIDTLKIETILSGEYDRNDAILTLHTGVGGSDANDWTEMLLRMYTRWCEKKGYSLETIDYLPGDEAGVKSVTLKVKGEFAYGYLKAEKGIHRLVRISPFNANGKRQTSFASVEVLPELTSDQDIEINPVDLRIDTYRAGGAGGQHVNKTESAVRITHIPTGIVVQCQNERSQFSNRDTAMGMLKSKLIELKERAHKEKIEDLTGELKDMGWGSQIRSYVFHPYSMVKDHRTNVETSNVNGVMDGDIDNFIIAYLNS.

Q250 bears the N5-methylglutamine mark.

Belongs to the prokaryotic/mitochondrial release factor family. Post-translationally, methylated by PrmC. Methylation increases the termination efficiency of RF2.

It is found in the cytoplasm. Functionally, peptide chain release factor 2 directs the termination of translation in response to the peptide chain termination codons UGA and UAA. This chain is Peptide chain release factor 2, found in Clostridium perfringens (strain ATCC 13124 / DSM 756 / JCM 1290 / NCIMB 6125 / NCTC 8237 / Type A).